Here is a 365-residue protein sequence, read N- to C-terminus: GDSL esterase/lipase At3g62280 (365 aa).

The first 25 residues, 1–25, serve as a signal peptide directing secretion; the sequence is MDYTVSSLQCFFLVLCLSLLVCSNS. Ser-43 acts as the Nucleophile in catalysis. Asn-137, Asn-178, and Asn-231 each carry an N-linked (GlcNAc...) asparagine glycan. Residues Asp-333 and His-336 contribute to the active site.

The protein belongs to the 'GDSL' lipolytic enzyme family.

The protein localises to the secreted. The polypeptide is GDSL esterase/lipase At3g62280 (Arabidopsis thaliana (Mouse-ear cress)).